Reading from the N-terminus, the 586-residue chain is CTP synthase (586 aa).

Residues 1–265 (MVRFIFVTGG…ENKVLNFFNI (265 aa)) are amidoligase domain. A CTP-binding site is contributed by serine 13. Serine 13 provides a ligand contact to UTP. Residues 14–19 (SLGKGI) and aspartate 71 contribute to the ATP site. 2 residues coordinate Mg(2+): aspartate 71 and glutamate 139. Residues 146–148 (DIE), 186–191 (KTKPTQ), and lysine 222 contribute to the CTP site. UTP contacts are provided by residues 186–191 (KTKPTQ) and lysine 222. Residues 290–582 (KIAIITKYHK…IKATIEYNKS (293 aa)) enclose the Glutamine amidotransferase type-1 domain. Glycine 352 lines the L-glutamine pocket. Catalysis depends on cysteine 379, which acts as the Nucleophile; for glutamine hydrolysis. L-glutamine is bound by residues 380–383 (FGMQ) and glutamate 403. One can recognise an RPE1 insert domain in the interval 429–473 (AHISKCTYSEAFECDASTVYTNIHEDSNNLSTDKLQIETNFRNMS). L-glutamine is bound at residue arginine 510. Residues histidine 555 and glutamate 557 contribute to the active site.

Belongs to the CTP synthase family. In terms of assembly, homotetramer.

It carries out the reaction UTP + L-glutamine + ATP + H2O = CTP + L-glutamate + ADP + phosphate + 2 H(+). The enzyme catalyses L-glutamine + H2O = L-glutamate + NH4(+). It catalyses the reaction UTP + NH4(+) + ATP = CTP + ADP + phosphate + 2 H(+). Its pathway is pyrimidine metabolism; CTP biosynthesis via de novo pathway; CTP from UDP: step 2/2. Its activity is regulated as follows. Allosterically activated by GTP, when glutamine is the substrate; GTP has no effect on the reaction when ammonia is the substrate. The allosteric effector GTP functions by stabilizing the protein conformation that binds the tetrahedral intermediate(s) formed during glutamine hydrolysis. Inhibited by the product CTP, via allosteric rather than competitive inhibition. In terms of biological role, catalyzes the ATP-dependent amination of UTP to CTP with either L-glutamine or ammonia as the source of nitrogen. Regulates intracellular CTP levels through interactions with the four ribonucleotide triphosphates. The sequence is that of CTP synthase from Rickettsia prowazekii (strain Madrid E).